A 678-amino-acid chain; its full sequence is ERAD-associated E3 ubiquitin-protein ligase component HRD3A (678 aa).

Positions 1-25 are cleaved as a signal peptide; that stretch reads MRILSYGIVILSLLVFSFIEFGVHA. A disordered region spans residues 40–71; sequence GGDDNGVGESSDFDEFGESEPKSEEELDPGSW. Sel1-like repeat units follow at residues 124 to 159, 242 to 277, 279 to 313, 317 to 349, 353 to 386, 388 to 422, 506 to 537, and 540 to 568; these read PHAQSIMGFVYGIGMMREKSKSKSFLHHNFAAAGGN, ANAMYKIGLFYYFGLRGLRRDHTKALHWFLKAVDKG, PRSMELLGEIYARGAGVERNYTKALEWLTLAAKEG, AFNGIGYLYVKGYGVDKKNYTKAREYFEKAVDN, SGHYNLGVLYLKGIGVNRDVRQATKYFFVAANAG, PKAFYQLAKMFHTGVGLKKNLEMATSFYKLVAERG, AALLIGDAYYYGRGTERDFVRAAEAYMHAKSQ, and AQAMFNLGYMHEHGQGLPFDLHLAKRYYD. N-linked (GlcNAc...) asparagine glycans are attached at residues asparagine 298 and asparagine 335. A helical membrane pass occupies residues 620–640; the sequence is VVFEEGNATILTLFVCLITIL.

It belongs to the sel-1 family. Interacts with OS9.

The protein localises to the endoplasmic reticulum membrane. In terms of biological role, component of the endoplasmic reticulum (ER) quality control system called ER-associated degradation (ERAD) and involved in ubiquitin-dependent degradation of misfolded endoplasmic reticulum proteins. Functions as an ERAD substrate-recruiting factor that recognizes misfolded proteins for the HRD1 E3 ubiquitin ligase complex. Targets the misfolded LRR receptor kinase BRI1. This chain is ERAD-associated E3 ubiquitin-protein ligase component HRD3A, found in Arabidopsis thaliana (Mouse-ear cress).